A 192-amino-acid polypeptide reads, in one-letter code: UPF0462 protein C4orf33 homolog (192 aa).

Belongs to the UPF0462 family.

This is UPF0462 protein C4orf33 homolog (D3Ertd751e) from Mus musculus (Mouse).